A 327-amino-acid chain; its full sequence is Probable cell division protein WhiA (327 aa).

The H-T-H motif DNA-binding region spans 275–308 (SLEELGRLADPQMTKDAVAGRIRRLLTMADKRAE).

This sequence belongs to the WhiA family.

Involved in cell division and chromosome segregation. The sequence is that of Probable cell division protein WhiA from Corynebacterium glutamicum (strain ATCC 13032 / DSM 20300 / JCM 1318 / BCRC 11384 / CCUG 27702 / LMG 3730 / NBRC 12168 / NCIMB 10025 / NRRL B-2784 / 534).